The sequence spans 326 residues: Transcription initiation factor IIB (326 aa).

The TFIIB-type zinc finger occupies 26–57; it reads DVEVCPECGSPRLIRDYRRGEFICQDCGLVIE. The Zn(2+) site is built by cysteine 30, cysteine 33, cysteine 49, and cysteine 52. 2 tandem repeats follow at residues 143–226 and 237–318.

The protein belongs to the TFIIB family.

Functionally, stabilizes TBP binding to an archaeal box-A promoter. Also responsible for recruiting RNA polymerase II to the pre-initiation complex (DNA-TBP-TFIIB). This chain is Transcription initiation factor IIB, found in Archaeoglobus fulgidus (strain ATCC 49558 / DSM 4304 / JCM 9628 / NBRC 100126 / VC-16).